A 64-amino-acid chain; its full sequence is Large ribosomal subunit protein bL35 (64 aa).

Residues 1 to 43 (MPKMKSKKSLAKRVIAKKNGTLKRGKAYRSHRATGKTTKQKRH) are disordered.

The protein belongs to the bacterial ribosomal protein bL35 family.

This is Large ribosomal subunit protein bL35 from Mesoplasma florum (strain ATCC 33453 / NBRC 100688 / NCTC 11704 / L1) (Acholeplasma florum).